Consider the following 387-residue polypeptide: Erythronate-4-phosphate dehydrogenase (387 aa).

Substrate is bound by residues Ser45 and Thr67. Position 147 (Asp147) interacts with NAD(+). Arg208 is a catalytic residue. NAD(+) is bound at residue Asp232. Residue Glu237 is part of the active site. His254 (proton donor) is an active-site residue. Residue Gly257 coordinates NAD(+). Tyr258 is a substrate binding site.

Belongs to the D-isomer specific 2-hydroxyacid dehydrogenase family. PdxB subfamily. As to quaternary structure, homodimer.

The protein resides in the cytoplasm. It catalyses the reaction 4-phospho-D-erythronate + NAD(+) = (R)-3-hydroxy-2-oxo-4-phosphooxybutanoate + NADH + H(+). It functions in the pathway cofactor biosynthesis; pyridoxine 5'-phosphate biosynthesis; pyridoxine 5'-phosphate from D-erythrose 4-phosphate: step 2/5. Its function is as follows. Catalyzes the oxidation of erythronate-4-phosphate to 3-hydroxy-2-oxo-4-phosphonooxybutanoate. This is Erythronate-4-phosphate dehydrogenase from Shewanella sediminis (strain HAW-EB3).